The following is a 168-amino-acid chain: Pheromone-binding protein (168 aa).

The signal sequence occupies residues 1–26 (MNKTTTKMKVAVVAIVVYLAVGNVDS). 3 cysteine pairs are disulfide-bonded: Cys-45-Cys-80, Cys-76-Cys-134, and Cys-123-Cys-143.

The protein belongs to the PBP/GOBP family. Homodimer. Antenna.

Its function is as follows. This major soluble protein in olfactory sensilla of male moths might serve to solubilize the extremely hydrophobic pheromone molecules and to transport pheromone through the aqueous lymph to receptors located on olfactory cilia. PBP is also found in sensilla from female M.sexta antennae. The chain is Pheromone-binding protein from Manduca sexta (Tobacco hawkmoth).